A 591-amino-acid chain; its full sequence is Formate--tetrahydrofolate ligase (591 aa).

An ATP-binding site is contributed by 74–81 (TPLGEGKS).

The protein belongs to the formate--tetrahydrofolate ligase family.

It catalyses the reaction (6S)-5,6,7,8-tetrahydrofolate + formate + ATP = (6R)-10-formyltetrahydrofolate + ADP + phosphate. It participates in one-carbon metabolism; tetrahydrofolate interconversion. This chain is Formate--tetrahydrofolate ligase, found in Desulfovibrio desulfuricans (strain ATCC 27774 / DSM 6949 / MB).